The primary structure comprises 305 residues: Ribonuclease BN (305 aa).

Histidine 63, histidine 65, aspartate 67, histidine 68, histidine 141, aspartate 212, and histidine 270 together coordinate Zn(2+). Aspartate 67 acts as the Proton acceptor in catalysis.

Belongs to the RNase Z family. RNase BN subfamily. As to quaternary structure, homodimer. Zn(2+) is required as a cofactor.

Its function is as follows. Zinc phosphodiesterase, which has both exoribonuclease and endoribonuclease activities. This chain is Ribonuclease BN, found in Proteus mirabilis (strain HI4320).